The sequence spans 412 residues: Burnettramic acids biosynthesis cluster protein E (412 aa).

3 disordered regions span residues 1–66, 308–342, and 386–412; these read MAIA…KKIR, RNPT…SLAT, and SRAE…AAKG. Residues 36–58 are compositionally biased toward acidic residues; the sequence is EDEQWALDELQDELCQEEPSDSE. Polar residues predominate over residues 395–404; it reads EATTEPSVQS.

The protein operates within mycotoxin biosynthesis. Part of the gene cluster that mediates the biosynthesis of burnettramic acids, an unusual class of bolaamphiphilic pyrrolizidinediones that display potent antibacterial, antifungal, and cytotoxic activities. The first step of the biosynthesis of burnettramic acids is the hydroxylation of proline by the proline hydroxylase buaE to generate 4-hydroxyproline. The PKS-NRPS buaA and trans-enoyl reductase buaC construct the highly reduced polyketide chain, and the condensation (C) domain of buaA then catalyzes the amide bond formation with the activated 4-hydroxyproline. This is followed by the R domain releasing the nascent polyketide-peptide directly via a Dieckmann condensation to afford a tetramic acid fused to the hydroxyproline, generating the bicyclic pyrrolidinedione moiety. The cytochrome P450 monooxygenases buaD and buaG are likely responsible for the multiple hydroxylations on the polyketide chain and its terminus, although in the heterologous context, buaD does not appear to be required. Therefore, while buaG may be a multifunctional cytochrome P450 monooxygenase, it cannot be ruled out that the two secondary alcohols on the polyketide chain could have an acetate origin. Finally, the glycosyltransferase buaB transfers beta-D-mannose to the aglycone burnettramic acid A to form burnettramic acid A. Burnettramic acid B is a minor cis-pyrrolizidine epimer of burnettramic acid A and it is likely that small amounts of it form naturally in acidic environments. The role of the uncharacterized protein buaF in the biosynthesis of burnettramic acids has still to be determined. This Petromyces alliaceus (Aspergillus alliaceus) protein is Burnettramic acids biosynthesis cluster protein E.